Reading from the N-terminus, the 164-residue chain is MMKTSAIHSPFEAPNTISLVAGTGDANNPLNAFDMSLLESGIGNLNLIRISSIMPPKAAIIPLPKIPQGSLVPTAYGYQISEVKGETVAAGISVAVPKDKELCGLIMEYECIGGKKECEDTVRNMAKEGFEMRGWEIDEIISIASEHTVENIGCAFAAAALWYK.

S52 carries the post-translational modification Pyruvic acid (Ser).

Belongs to the PdaD family. Pyruvate serves as cofactor.

The catalysed reaction is L-arginine + H(+) = agmatine + CO2. The chain is Pyruvoyl-dependent arginine decarboxylase from Methanococcus maripaludis (strain C7 / ATCC BAA-1331).